Consider the following 325-residue polypeptide: Glycerol-3-phosphate dehydrogenase [NAD(P)+] (325 aa).

Residues Trp15, Arg35, and Lys107 each contribute to the NADPH site. Sn-glycerol 3-phosphate is bound by residues Lys107, Gly135, and Ser137. An NADPH-binding site is contributed by Ala139. Lys190, Asp243, Ser253, Arg254, and Asn255 together coordinate sn-glycerol 3-phosphate. Lys190 acts as the Proton acceptor in catalysis. Arg254 contacts NADPH. Residues Leu272 and Glu274 each contribute to the NADPH site.

The protein belongs to the NAD-dependent glycerol-3-phosphate dehydrogenase family.

The protein localises to the cytoplasm. It carries out the reaction sn-glycerol 3-phosphate + NAD(+) = dihydroxyacetone phosphate + NADH + H(+). The catalysed reaction is sn-glycerol 3-phosphate + NADP(+) = dihydroxyacetone phosphate + NADPH + H(+). It participates in membrane lipid metabolism; glycerophospholipid metabolism. Functionally, catalyzes the reduction of the glycolytic intermediate dihydroxyacetone phosphate (DHAP) to sn-glycerol 3-phosphate (G3P), the key precursor for phospholipid synthesis. The sequence is that of Glycerol-3-phosphate dehydrogenase [NAD(P)+] from Afipia carboxidovorans (strain ATCC 49405 / DSM 1227 / KCTC 32145 / OM5) (Oligotropha carboxidovorans).